A 220-amino-acid chain; its full sequence is Protein-L-isoaspartate O-methyltransferase (220 aa).

The active site involves Ser-65.

This sequence belongs to the methyltransferase superfamily. L-isoaspartyl/D-aspartyl protein methyltransferase family.

It localises to the cytoplasm. The catalysed reaction is [protein]-L-isoaspartate + S-adenosyl-L-methionine = [protein]-L-isoaspartate alpha-methyl ester + S-adenosyl-L-homocysteine. Functionally, catalyzes the methyl esterification of L-isoaspartyl residues in peptides and proteins that result from spontaneous decomposition of normal L-aspartyl and L-asparaginyl residues. It plays a role in the repair and/or degradation of damaged proteins. The protein is Protein-L-isoaspartate O-methyltransferase (pcm) of Pyrococcus horikoshii (strain ATCC 700860 / DSM 12428 / JCM 9974 / NBRC 100139 / OT-3).